A 473-amino-acid polypeptide reads, in one-letter code: UDP-N-acetylmuramate--L-alanine ligase (473 aa).

Residue 123 to 129 coordinates ATP; that stretch reads GTHGKTT.

It belongs to the MurCDEF family.

It is found in the cytoplasm. The enzyme catalyses UDP-N-acetyl-alpha-D-muramate + L-alanine + ATP = UDP-N-acetyl-alpha-D-muramoyl-L-alanine + ADP + phosphate + H(+). It functions in the pathway cell wall biogenesis; peptidoglycan biosynthesis. Functionally, cell wall formation. The polypeptide is UDP-N-acetylmuramate--L-alanine ligase (Marinomonas sp. (strain MWYL1)).